A 592-amino-acid polypeptide reads, in one-letter code: Salivary peroxidase/catechol oxidase (592 aa).

Residues 1 to 21 (MWMFLKLLLFVCSSWWSCAQA) form the signal peptide. Cys-24 and Cys-37 are disulfide-bonded. N-linked (GlcNAc...) asparagine glycosylation occurs at Asn-25. His-110 functions as the Proton acceptor in the catalytic mechanism. Ca(2+)-binding residues include Asp-111, Thr-187, Phe-189, Asp-191, and Ser-193. A glycan (N-linked (GlcNAc...) asparagine) is linked at Asn-230. Residues Cys-235 and Cys-244 are joined by a disulfide bond. His-353 contacts heme b. A glycan (N-linked (GlcNAc...) asparagine) is linked at Asn-366. 2 disulfides stabilise this stretch: Cys-452-Cys-509 and Cys-553-Cys-580.

It belongs to the peroxidase family. XPO subfamily. In terms of tissue distribution, female salivary gland.

The protein resides in the secreted. The enzyme catalyses 2 catechol + O2 = 2 1,2-benzoquinone + 2 H2O. Inhibits noradrenaline-induced smooth muscle contraction in the host, probably due to the oxidation of noradrenaline, resulting in vasodilation. Exhibits peroxidase activity. This Anopheles albimanus (New world malaria mosquito) protein is Salivary peroxidase/catechol oxidase.